The following is a 317-amino-acid chain: Aspartate carbamoyltransferase catalytic subunit (317 aa).

Carbamoyl phosphate contacts are provided by Arg66 and Thr67. Residue Lys94 coordinates L-aspartate. The carbamoyl phosphate site is built by Arg116, His144, and Gln147. L-aspartate contacts are provided by Arg177 and Arg231. Carbamoyl phosphate is bound by residues Gly272 and Pro273.

Belongs to the aspartate/ornithine carbamoyltransferase superfamily. ATCase family. Heterododecamer (2C3:3R2) of six catalytic PyrB chains organized as two trimers (C3), and six regulatory PyrI chains organized as three dimers (R2).

The catalysed reaction is carbamoyl phosphate + L-aspartate = N-carbamoyl-L-aspartate + phosphate + H(+). Its pathway is pyrimidine metabolism; UMP biosynthesis via de novo pathway; (S)-dihydroorotate from bicarbonate: step 2/3. In terms of biological role, catalyzes the condensation of carbamoyl phosphate and aspartate to form carbamoyl aspartate and inorganic phosphate, the committed step in the de novo pyrimidine nucleotide biosynthesis pathway. The protein is Aspartate carbamoyltransferase catalytic subunit of Rhodopseudomonas palustris (strain BisB18).